Here is a 699-residue protein sequence, read N- to C-terminus: Bifunctional protein GAL10 (699 aa).

The interval 1 to 357 (MTAQLQSEST…TTENPFGYQL (357 aa)) is galactowaldenase. 13 to 44 (IVLVTGGAGYIGSHTVVELIENGYDCVVADNL) contacts NAD(+). The segment at 358–699 (RGVEARFSAE…YGSKIVYRFS (342 aa)) is mutarotase. The active-site For mutarotase activity is histidine 537. Position 562 is a phosphoserine (serine 562).

The protein in the N-terminal section; belongs to the NAD(P)-dependent epimerase/dehydratase family. In the C-terminal section; belongs to the aldose epimerase family. Requires NAD(+) as cofactor.

The enzyme catalyses UDP-alpha-D-glucose = UDP-alpha-D-galactose. The catalysed reaction is alpha-D-glucose = beta-D-glucose. It participates in carbohydrate metabolism; galactose metabolism. It functions in the pathway carbohydrate metabolism; hexose metabolism. Functionally, mutarotase converts alpha-aldose to the beta-anomer. It is active on D-glucose, L-arabinose, D-xylose, D-galactose, maltose and lactose. The chain is Bifunctional protein GAL10 (GAL10) from Saccharomyces cerevisiae (strain ATCC 204508 / S288c) (Baker's yeast).